The primary structure comprises 804 residues: Phenylalanine--tRNA ligase beta subunit (804 aa).

One can recognise a tRNA-binding domain in the interval 38-148 (RAAFRAFTIA…ENAPVGTSFA (111 aa)). The region spanning 401-476 (HTARVIDFPV…RIHGINRIDP (76 aa)) is the B5 domain. Mg(2+) contacts are provided by Asp454, Asp460, Glu463, and Glu464. Positions 710 to 803 (SLFQSLKRDY…VAKQTGGVLR (94 aa)) constitute an FDX-ACB domain.

This sequence belongs to the phenylalanyl-tRNA synthetase beta subunit family. Type 1 subfamily. As to quaternary structure, tetramer of two alpha and two beta subunits. Mg(2+) is required as a cofactor.

The protein resides in the cytoplasm. The catalysed reaction is tRNA(Phe) + L-phenylalanine + ATP = L-phenylalanyl-tRNA(Phe) + AMP + diphosphate + H(+). The polypeptide is Phenylalanine--tRNA ligase beta subunit (Brucella melitensis biotype 1 (strain ATCC 23456 / CCUG 17765 / NCTC 10094 / 16M)).